A 253-amino-acid polypeptide reads, in one-letter code: 5'/3'-nucleotidase SurE (253 aa).

Positions 8, 9, 39, and 92 each coordinate a divalent metal cation.

It belongs to the SurE nucleotidase family. A divalent metal cation is required as a cofactor.

Its subcellular location is the cytoplasm. The catalysed reaction is a ribonucleoside 5'-phosphate + H2O = a ribonucleoside + phosphate. It catalyses the reaction a ribonucleoside 3'-phosphate + H2O = a ribonucleoside + phosphate. It carries out the reaction [phosphate](n) + H2O = [phosphate](n-1) + phosphate + H(+). Functionally, nucleotidase with a broad substrate specificity as it can dephosphorylate various ribo- and deoxyribonucleoside 5'-monophosphates and ribonucleoside 3'-monophosphates with highest affinity to 3'-AMP. Also hydrolyzes polyphosphate (exopolyphosphatase activity) with the preference for short-chain-length substrates (P20-25). Might be involved in the regulation of dNTP and NTP pools, and in the turnover of 3'-mononucleotides produced by numerous intracellular RNases (T1, T2, and F) during the degradation of various RNAs. In Sodalis glossinidius (strain morsitans), this protein is 5'/3'-nucleotidase SurE.